A 155-amino-acid polypeptide reads, in one-letter code: MPKYVEGKLNAEGLKFGIIVGRFNSFIGERLLEGALDALLRHGADDAQITVVRVPGAFEIPLTAQKMAGSGNYDALICLGAVIRGSTPHFDYVSSEVSKGIAHASLATGVPVAFGVLTTDTIEQAIERAGTKAGNKGFDAAMTVIEIANVFKEMK.

5-amino-6-(D-ribitylamino)uracil is bound by residues F23, 57 to 59 (AFE), and 81 to 83 (AVI). 86–87 (ST) provides a ligand contact to (2S)-2-hydroxy-3-oxobutyl phosphate. Catalysis depends on H89, which acts as the Proton donor. F114 is a 5-amino-6-(D-ribitylamino)uracil binding site. R128 contributes to the (2S)-2-hydroxy-3-oxobutyl phosphate binding site.

Belongs to the DMRL synthase family.

The catalysed reaction is (2S)-2-hydroxy-3-oxobutyl phosphate + 5-amino-6-(D-ribitylamino)uracil = 6,7-dimethyl-8-(1-D-ribityl)lumazine + phosphate + 2 H2O + H(+). It participates in cofactor biosynthesis; riboflavin biosynthesis; riboflavin from 2-hydroxy-3-oxobutyl phosphate and 5-amino-6-(D-ribitylamino)uracil: step 1/2. Its function is as follows. Catalyzes the formation of 6,7-dimethyl-8-ribityllumazine by condensation of 5-amino-6-(D-ribitylamino)uracil with 3,4-dihydroxy-2-butanone 4-phosphate. This is the penultimate step in the biosynthesis of riboflavin. This chain is 6,7-dimethyl-8-ribityllumazine synthase, found in Geobacter sp. (strain M21).